The following is a 125-amino-acid chain: uncharacterized protein (125 aa).

The tract at residues 1-21 is disordered; sequence MLFYHCSSFSSSSSSSSSSAS. Positions 7–21 are enriched in low complexity; sequence SSFSSSSSSSSSSAS.

This is an uncharacterized protein from Saccharomyces cerevisiae (strain ATCC 204508 / S288c) (Baker's yeast).